A 194-amino-acid chain; its full sequence is Peptidyl-tRNA hydrolase (194 aa).

Tyr16 contacts tRNA. His21 acts as the Proton acceptor in catalysis. TRNA contacts are provided by Phe67, Asn69, and Asn115.

The protein belongs to the PTH family. Monomer.

It is found in the cytoplasm. It catalyses the reaction an N-acyl-L-alpha-aminoacyl-tRNA + H2O = an N-acyl-L-amino acid + a tRNA + H(+). Functionally, hydrolyzes ribosome-free peptidyl-tRNAs (with 1 or more amino acids incorporated), which drop off the ribosome during protein synthesis, or as a result of ribosome stalling. Catalyzes the release of premature peptidyl moieties from peptidyl-tRNA molecules trapped in stalled 50S ribosomal subunits, and thus maintains levels of free tRNAs and 50S ribosomes. In Salmonella paratyphi B (strain ATCC BAA-1250 / SPB7), this protein is Peptidyl-tRNA hydrolase.